The primary structure comprises 92 residues: C-C motif chemokine 4 (92 aa).

The first 23 residues, 1 to 23 (MKLCVSAFSLLLLVAAFCDSVLS), serve as a signal peptide directing secretion. Disulfide bonds link C34–C58 and C35–C74.

It belongs to the intercrine beta (chemokine CC) family. As to quaternary structure, homodimer.

It localises to the secreted. Monokine with inflammatory and chemokinetic properties. The sequence is that of C-C motif chemokine 4 (Ccl4) from Rattus norvegicus (Rat).